Reading from the N-terminus, the 153-residue chain is Superoxide dismutase [Cu-Zn] (153 aa).

Positions 45, 47, and 62 each coordinate Cu cation. A disulfide bridge links C56 with C145. H62, H70, H79, and D82 together coordinate Zn(2+). Cu cation is bound at residue H119.

The protein belongs to the Cu-Zn superoxide dismutase family. In terms of assembly, homodimer. It depends on Cu cation as a cofactor. Zn(2+) is required as a cofactor.

It localises to the cytoplasm. It carries out the reaction 2 superoxide + 2 H(+) = H2O2 + O2. Destroys radicals which are normally produced within the cells and which are toxic to biological systems. This is Superoxide dismutase [Cu-Zn] from Drosophila teissieri (Fruit fly).